The primary structure comprises 709 residues: Phosphoribosylformylglycinamidine synthase subunit PurL (709 aa).

H36 is a catalytic residue. Y39 and K80 together coordinate ATP. E82 is a Mg(2+) binding site. Substrate-binding positions include 83-86 (SHNH) and R105. Residue H84 is the Proton acceptor of the active site. D106 lines the Mg(2+) pocket. Q226 contributes to the substrate binding site. D252 serves as a coordination point for Mg(2+). Position 294–296 (294–296 (ETQ)) interacts with substrate. Positions 470 and 507 each coordinate ATP. Residue S510 coordinates substrate.

This sequence belongs to the FGAMS family. As to quaternary structure, monomer. Part of the FGAM synthase complex composed of 1 PurL, 1 PurQ and 2 PurS subunits.

It is found in the cytoplasm. The catalysed reaction is N(2)-formyl-N(1)-(5-phospho-beta-D-ribosyl)glycinamide + L-glutamine + ATP + H2O = 2-formamido-N(1)-(5-O-phospho-beta-D-ribosyl)acetamidine + L-glutamate + ADP + phosphate + H(+). It functions in the pathway purine metabolism; IMP biosynthesis via de novo pathway; 5-amino-1-(5-phospho-D-ribosyl)imidazole from N(2)-formyl-N(1)-(5-phospho-D-ribosyl)glycinamide: step 1/2. Part of the phosphoribosylformylglycinamidine synthase complex involved in the purines biosynthetic pathway. Catalyzes the ATP-dependent conversion of formylglycinamide ribonucleotide (FGAR) and glutamine to yield formylglycinamidine ribonucleotide (FGAM) and glutamate. The FGAM synthase complex is composed of three subunits. PurQ produces an ammonia molecule by converting glutamine to glutamate. PurL transfers the ammonia molecule to FGAR to form FGAM in an ATP-dependent manner. PurS interacts with PurQ and PurL and is thought to assist in the transfer of the ammonia molecule from PurQ to PurL. The chain is Phosphoribosylformylglycinamidine synthase subunit PurL from Saccharolobus islandicus (strain Y.N.15.51 / Yellowstone #2) (Sulfolobus islandicus).